Reading from the N-terminus, the 262-residue chain is S-methyl-5'-thioadenosine phosphorylase (262 aa).

Phosphate is bound by residues S12, 54-55, and 87-88; these read RH and SA. M185 serves as a coordination point for substrate. Phosphate is bound at residue T186. Residue 209 to 211 participates in substrate binding; it reads DYD.

The protein belongs to the PNP/MTAP phosphorylase family. MTAP subfamily. As to quaternary structure, homohexamer. Dimer of a homotrimer.

It carries out the reaction S-methyl-5'-thioadenosine + phosphate = 5-(methylsulfanyl)-alpha-D-ribose 1-phosphate + adenine. It participates in amino-acid biosynthesis; L-methionine biosynthesis via salvage pathway; S-methyl-5-thio-alpha-D-ribose 1-phosphate from S-methyl-5'-thioadenosine (phosphorylase route): step 1/1. Catalyzes the reversible phosphorylation of S-methyl-5'-thioadenosine (MTA) to adenine and 5-methylthioribose-1-phosphate. Involved in the breakdown of MTA, a major by-product of polyamine biosynthesis. Responsible for the first step in the methionine salvage pathway after MTA has been generated from S-adenosylmethionine. Has broad substrate specificity with 6-aminopurine nucleosides as preferred substrates. The protein is S-methyl-5'-thioadenosine phosphorylase of Thermofilum pendens (strain DSM 2475 / Hrk 5).